A 352-amino-acid chain; its full sequence is Holliday junction branch migration complex subunit RuvB (352 aa).

The segment at 4-191 (TDKLAAPARV…FGIVARLEFY (188 aa)) is large ATPase domain (RuvB-L). ATP is bound by residues leucine 30, arginine 31, glycine 72, lysine 75, threonine 76, threonine 77, 138–140 (EDY), arginine 181, tyrosine 191, and arginine 228. Residue threonine 76 coordinates Mg(2+). The segment at 192 to 262 (TADELARIVT…MADAALAMLD (71 aa)) is small ATPAse domain (RuvB-S). The tract at residues 265–352 (SVGFDLMDRK…SGASELFGDA (88 aa)) is head domain (RuvB-H). Positions 301, 320, and 325 each coordinate DNA.

This sequence belongs to the RuvB family. As to quaternary structure, homohexamer. Forms an RuvA(8)-RuvB(12)-Holliday junction (HJ) complex. HJ DNA is sandwiched between 2 RuvA tetramers; dsDNA enters through RuvA and exits via RuvB. An RuvB hexamer assembles on each DNA strand where it exits the tetramer. Each RuvB hexamer is contacted by two RuvA subunits (via domain III) on 2 adjacent RuvB subunits; this complex drives branch migration. In the full resolvosome a probable DNA-RuvA(4)-RuvB(12)-RuvC(2) complex forms which resolves the HJ.

The protein resides in the cytoplasm. It catalyses the reaction ATP + H2O = ADP + phosphate + H(+). The RuvA-RuvB-RuvC complex processes Holliday junction (HJ) DNA during genetic recombination and DNA repair, while the RuvA-RuvB complex plays an important role in the rescue of blocked DNA replication forks via replication fork reversal (RFR). RuvA specifically binds to HJ cruciform DNA, conferring on it an open structure. The RuvB hexamer acts as an ATP-dependent pump, pulling dsDNA into and through the RuvAB complex. RuvB forms 2 homohexamers on either side of HJ DNA bound by 1 or 2 RuvA tetramers; 4 subunits per hexamer contact DNA at a time. Coordinated motions by a converter formed by DNA-disengaged RuvB subunits stimulates ATP hydrolysis and nucleotide exchange. Immobilization of the converter enables RuvB to convert the ATP-contained energy into a lever motion, pulling 2 nucleotides of DNA out of the RuvA tetramer per ATP hydrolyzed, thus driving DNA branch migration. The RuvB motors rotate together with the DNA substrate, which together with the progressing nucleotide cycle form the mechanistic basis for DNA recombination by continuous HJ branch migration. Branch migration allows RuvC to scan DNA until it finds its consensus sequence, where it cleaves and resolves cruciform DNA. The sequence is that of Holliday junction branch migration complex subunit RuvB from Cupriavidus necator (strain ATCC 17699 / DSM 428 / KCTC 22496 / NCIMB 10442 / H16 / Stanier 337) (Ralstonia eutropha).